We begin with the raw amino-acid sequence, 53 residues long: Sec-independent protein translocase protein TatA (53 aa).

The chain crosses the membrane as a helical span at residues 1 to 21 (MGMSFSHLLIVLLIIFVLFGA).

Belongs to the TatA/E family. In terms of assembly, the Tat system comprises two distinct complexes: a TatABC complex, containing multiple copies of TatA, TatB and TatC subunits, and a separate TatA complex, containing only TatA subunits. Substrates initially bind to the TatABC complex, which probably triggers association of the separate TatA complex to form the active translocon.

The protein resides in the cell inner membrane. Its function is as follows. Part of the twin-arginine translocation (Tat) system that transports large folded proteins containing a characteristic twin-arginine motif in their signal peptide across membranes. TatA could form the protein-conducting channel of the Tat system. This Rickettsia typhi (strain ATCC VR-144 / Wilmington) protein is Sec-independent protein translocase protein TatA.